Consider the following 166-residue polypeptide: Coiled-coil domain-containing protein 12 (166 aa).

At Met1 the chain carries N-acetylmethionine. A coiled-coil region spans residues 8-28; that stretch reads VGRLEEEALRRKERLKALREK. Over residues 21 to 53 the composition is skewed to basic and acidic residues; it reads RLKALREKTGRKDREDGEPQTKQLREEGEEVGK. The interval 21-55 is disordered; sequence RLKALREKTGRKDREDGEPQTKQLREEGEEVGKHR. An N6-acetyllysine modification is found at Lys53. A Glycyl lysine isopeptide (Lys-Gly) (interchain with G-Cter in SUMO2) cross-link involves residue Lys94. Residues 115–144 are a coiled coil; sequence DLKRDVAKKLEKLEKRTQRAIAELIRERLK. The tract at residues 146–166 is disordered; sequence QEDSLASAVDATTGQEACDSD. Ser149 and Ser165 each carry phosphoserine.

The chain is Coiled-coil domain-containing protein 12 (Ccdc12) from Mus musculus (Mouse).